A 358-amino-acid polypeptide reads, in one-letter code: 3-isopropylmalate dehydrogenase (358 aa).

77–90 (GEKWDSLPRELRPE) is an NAD(+) binding site. 4 residues coordinate substrate: Arg-97, Arg-107, Arg-135, and Asp-220. Mg(2+)-binding residues include Asp-220, Asp-244, and Asp-248. 277 to 289 (GSAPDIAGQGIAN) contributes to the NAD(+) binding site.

It belongs to the isocitrate and isopropylmalate dehydrogenases family. LeuB type 1 subfamily. In terms of assembly, homodimer. Mg(2+) is required as a cofactor. Requires Mn(2+) as cofactor.

The protein localises to the cytoplasm. The catalysed reaction is (2R,3S)-3-isopropylmalate + NAD(+) = 4-methyl-2-oxopentanoate + CO2 + NADH. It participates in amino-acid biosynthesis; L-leucine biosynthesis; L-leucine from 3-methyl-2-oxobutanoate: step 3/4. Functionally, catalyzes the oxidation of 3-carboxy-2-hydroxy-4-methylpentanoate (3-isopropylmalate) to 3-carboxy-4-methyl-2-oxopentanoate. The product decarboxylates to 4-methyl-2 oxopentanoate. In Wolinella succinogenes (strain ATCC 29543 / DSM 1740 / CCUG 13145 / JCM 31913 / LMG 7466 / NCTC 11488 / FDC 602W) (Vibrio succinogenes), this protein is 3-isopropylmalate dehydrogenase.